Consider the following 199-residue polypeptide: Inner membrane-spanning protein YciB (199 aa).

Transmembrane regions (helical) follow at residues 4 to 24 (FIDF…PRIV), 36 to 56 (IFSA…TLFL), 64 to 84 (GQWI…TFQS), 90 to 110 (WKAP…HFIG), 135 to 155 (LAWV…AFTF), and 162 to 182 (FKVF…GVFL).

This sequence belongs to the YciB family.

It is found in the cell inner membrane. Plays a role in cell envelope biogenesis, maintenance of cell envelope integrity and membrane homeostasis. The sequence is that of Inner membrane-spanning protein YciB from Azotobacter vinelandii (strain DJ / ATCC BAA-1303).